The sequence spans 101 residues: Large ribosomal subunit protein uL23 (101 aa).

This sequence belongs to the universal ribosomal protein uL23 family. Part of the 50S ribosomal subunit. Contacts protein L29, and trigger factor when it is bound to the ribosome.

Its function is as follows. One of the early assembly proteins it binds 23S rRNA. One of the proteins that surrounds the polypeptide exit tunnel on the outside of the ribosome. Forms the main docking site for trigger factor binding to the ribosome. This Histophilus somni (strain 129Pt) (Haemophilus somnus) protein is Large ribosomal subunit protein uL23.